The chain runs to 424 residues: Magnesium-chelatase subunit ChlI-1, chloroplastic (424 aa).

The N-terminal 60 residues, methionine 1–serine 60, are a transit peptide targeting the chloroplast. Valine 61 carries the N-acetylvaline modification. 2 disulfide bridges follow: cysteine 102/cysteine 193 and cysteine 354/cysteine 396. Glycine 119 to serine 126 serves as a coordination point for ATP. Serine 355 is modified (phosphoserine).

Belongs to the Mg-chelatase subunits D/I family. As to quaternary structure, the magnesium chelatase complex is a heterotrimer consisting of subunits CHLI, CHLD and CHLH. Interacts with CHLH and CHLD.

It localises to the plastid. Its subcellular location is the chloroplast. It catalyses the reaction protoporphyrin IX + Mg(2+) + ATP + H2O = Mg-protoporphyrin IX + ADP + phosphate + 3 H(+). Its pathway is porphyrin-containing compound metabolism; chlorophyll biosynthesis. With respect to regulation, redox regulation; active in reducing conditions, inactive in oxidizing conditions. Thioredoxins f and m mediate the reversible reductive activation of oxidized CHLI1. Involved in chlorophyll biosynthesis. Catalyzes the insertion of magnesium ion into protoporphyrin IX to yield Mg-protoporphyrin IX. The magnesium-chelatase is a complex of three subunits, CHLI, CHLD and CHLH. The reaction takes place in two steps, with an ATP-dependent activation followed by an ATP-dependent chelation step. Possesses high affinity for ATP and may play a major role in chlorophyll biosynthesis. Does not bind abscisic acid (ABA), but is a positive regulator of ABA signaling. May be involved in ABA signaling in the control of stomatal aperture, but does not seem to have an effect on ABA-induced gene expression. This Arabidopsis thaliana (Mouse-ear cress) protein is Magnesium-chelatase subunit ChlI-1, chloroplastic (CHLI1).